Reading from the N-terminus, the 114-residue chain is uncharacterized protein (114 aa).

This is an uncharacterized protein from Mycobacterium bovis (strain ATCC BAA-935 / AF2122/97).